The chain runs to 100 residues: Urease subunit gamma (100 aa).

The protein belongs to the urease gamma subunit family. Heterotrimer of UreA (gamma), UreB (beta) and UreC (alpha) subunits. Three heterotrimers associate to form the active enzyme.

It localises to the cytoplasm. The enzyme catalyses urea + 2 H2O + H(+) = hydrogencarbonate + 2 NH4(+). It participates in nitrogen metabolism; urea degradation; CO(2) and NH(3) from urea (urease route): step 1/1. This chain is Urease subunit gamma, found in Aliivibrio fischeri (strain ATCC 700601 / ES114) (Vibrio fischeri).